A 664-amino-acid chain; its full sequence is Macoilin (664 aa).

4 consecutive transmembrane segments (helical) span residues 28-48, 75-95, 120-140, and 154-174; these read TFLYLKFLVVWALVLLADFVL, AFSVFFVCVAFTSNIICLLFI, VCLPTVSLWILFVYIEAAIRF, and FAAHCIGYPVVTLGFGFKSYV. A compositionally biased stretch (basic and acidic residues) spans 253–265; it reads REKGKEKDKDAKK. The segment at 253–274 is disordered; that stretch reads REKGKEKDKDAKKHNLGINNNN. Phosphoserine is present on Ser305. A compositionally biased stretch (polar residues) spans 320–348; that stretch reads KNYKNASGVVNSSPRSHSATNGSIPSSSS. Positions 320-367 are disordered; the sequence is KNYKNASGVVNSSPRSHSATNGSIPSSSSKNEKKQKCTSKSPSAHKDL. Asn324 carries an N-linked (GlcNAc...) asparagine glycan. Ser332 is subject to Phosphoserine. 2 N-linked (GlcNAc...) asparagine glycosylation sites follow: Asn340 and Asn452. A disordered region spans residues 630 to 664; sequence TSPLSPVSPHYSSKFVETSPSGLDPNASVYQPLKK. Phosphoserine occurs at positions 631 and 634. Asn655 carries an N-linked (GlcNAc...) asparagine glycan.

The protein belongs to the macoilin family.

Its subcellular location is the rough endoplasmic reticulum membrane. The protein resides in the nucleus membrane. Its function is as follows. Plays a role in the regulation of neuronal activity. In Sus scrofa (Pig), this protein is Macoilin (MACO1).